Here is a 147-residue protein sequence, read N- to C-terminus: MLMRSDPFRELDRLTNQVLGTPTRPAVMPMDAWRVGRRLVVEFDLPGIDAESLDIDIERNVLTVRAERPALDPNREMLATERPRGVFSRELVLGDNLDTDKIEASYRDGVLSLHIPVDEKARPRKIAVGAARHPEPSPKTAREVVNA.

In terms of domain architecture, sHSP spans 21 to 131; it reads TPTRPAVMPM…RPRKIAVGAA (111 aa).

It belongs to the small heat shock protein (HSP20) family.

Its function is as follows. Not known. This protein is one of the major immune reactive proteins in mycobacteria. This chain is 18 kDa antigen 1, found in Mycobacterium avium.